The following is a 441-amino-acid chain: ATP-dependent protease ATPase subunit HslU (441 aa).

Residues Ile18 and 60-65 each bind ATP; that span reads GVGKTE. The disordered stretch occupies residues 131–158; that stretch reads ILDALLPRPRGSEYDHARDESSTRQTFR. A compositionally biased stretch (basic and acidic residues) spans 140–152; the sequence is RGSEYDHARDESS. Asp254, Glu320, and Arg392 together coordinate ATP.

Belongs to the ClpX chaperone family. HslU subfamily. As to quaternary structure, a double ring-shaped homohexamer of HslV is capped on each side by a ring-shaped HslU homohexamer. The assembly of the HslU/HslV complex is dependent on binding of ATP.

The protein resides in the cytoplasm. In terms of biological role, ATPase subunit of a proteasome-like degradation complex; this subunit has chaperone activity. The binding of ATP and its subsequent hydrolysis by HslU are essential for unfolding of protein substrates subsequently hydrolyzed by HslV. HslU recognizes the N-terminal part of its protein substrates and unfolds these before they are guided to HslV for hydrolysis. The protein is ATP-dependent protease ATPase subunit HslU of Chromohalobacter salexigens (strain ATCC BAA-138 / DSM 3043 / CIP 106854 / NCIMB 13768 / 1H11).